The chain runs to 467 residues: Protein PHOSPHATE STARVATION RESPONSE 3 (467 aa).

The interval 227-266 is disordered; the sequence is MSLPVSSCSDQEDLQDARSPAKVQLSSSRSSSGTASCNKP. Residues 262 to 322 enclose the HTH myb-type domain; that stretch reads SCNKPRLRWT…HLQKYRLAKY (61 aa). The segment at residues 293–318 is a DNA-binding region (H-T-H motif); it reads PKGVLKLMKVEGLTIYHIKSHLQKYR. The segment covering 327 to 337 has biased composition (basic and acidic residues); the sequence is KEDKKQEEKKT. Disordered stretches follow at residues 327 to 353 and 400 to 467; these read KEDKKQEEKKTKSVANGNDHAKKKSAQ and RESI…VHDE. Residues 402–412 are compositionally biased toward polar residues; sequence SISSMTSTTEG. Basic and acidic residues-rich tracts occupy residues 419 to 428 and 438 to 467; these read PMEKTEDKAE and RITDTDAECHSKVDNKKTKPQADLEMVHDE.

It is found in the nucleus. In terms of biological role, transcription factor involved in phosphate starvation signaling. Binds to P1BS, an imperfect palindromic sequence 5'-GNATATNC-3', to promote the expression of inorganic phosphate (Pi) starvation-responsive genes. Functionally redundant with PHR1 and PHR2 in regulating Pi starvation response and Pi homeostasis. The chain is Protein PHOSPHATE STARVATION RESPONSE 3 from Oryza sativa subsp. indica (Rice).